Consider the following 440-residue polypeptide: P47(GAG-CRK) protein (440 aa).

The tract at residues 1–208 is gag first part; that stretch reads MEAVIKVISS…TPRGAEQPRA (208 aa). The short motif at 174 to 177 is the PPXY motif element; that stretch reads PPPY. The interval 183 to 230 is disordered; it reads YPSLAGVGEQQGQGGDTPRGAEQPRAGRGAGHRGLRRPAGRGQRVRPA. Positions 209–437 are CRK; the sequence is GRGAGHRGLR…PSSASVSTLT (229 aa). Basic residues predominate over residues 212–221; the sequence is AGHRGLRRPA. The SH2 domain maps to 248-354; the sequence is WYWGRLSRGD…LDTTTLIEPV (107 aa). In terms of domain architecture, SH3 spans 368–428; sequence EEVEYVRALF…PVPYVEKCRP (61 aa). The gag second part stretch occupies residues 438–440; that stretch reads GGR.

The chain is P47(GAG-CRK) protein from Avian sarcoma virus CT10 (Avian sarcoma virus (strain CT10)).